The sequence spans 166 residues: UPF0304 protein VC_1871 (166 aa).

It belongs to the UPF0304 family.

The sequence is that of UPF0304 protein VC_1871 from Vibrio cholerae serotype O1 (strain ATCC 39315 / El Tor Inaba N16961).